Here is a 662-residue protein sequence, read N- to C-terminus: Eukaryotic peptide chain release factor GTP-binding subunit (662 aa).

Residues 1–220 (MASNQPNNGE…PATVTEDATD (220 aa)) are disordered. Over residues 26-40 (AKAPTFTPKAAPFIP) the composition is skewed to low complexity. Residues 62–89 (YTGQGQNSNSPHPTKSYQQYYQKPTGNT) are compositionally biased toward polar residues. Positions 91–102 (DEDKSRVPDFSK) are enriched in basic and acidic residues. Over residues 122 to 134 (GGNTSAPKSTKPI) the composition is skewed to polar residues. Positions 141–158 (TKAPTTTKPAAPAAQSKT) are enriched in low complexity. T182 bears the Phosphothreonine mark. Positions 192-213 (AKTPSAPAAALKKAAEAAEPAT) are enriched in low complexity. One can recognise a tr-type G domain in the interval 236 to 464 (KEHVNIVFIG…LDSMTHLERK (229 aa)). The G1 stretch occupies residues 245 to 252 (GHVDAGKS). 245–252 (GHVDAGKS) contacts GTP. A G2 region spans residues 301 to 305 (GKTVE). Residues 322–325 (DAPG) are G3. GTP contacts are provided by residues 384 to 387 (NKMD) and 428 to 429 (AY). Positions 384 to 387 (NKMD) are G4. A G5 region spans residues 427-429 (SAY). S539 is modified (phosphoserine).

This sequence belongs to the TRAFAC class translation factor GTPase superfamily. Classic translation factor GTPase family. ERF3 subfamily. Component of the eRF1-eRF3-GTP ternary complex, composed of sup45/eRF1, sup35/eRF3 and GTP.

Its subcellular location is the cytoplasm. The enzyme catalyses GTP + H2O = GDP + phosphate + H(+). In terms of biological role, GTPase component of the eRF1-eRF3-GTP ternary complex, a ternary complex that mediates translation termination in response to the termination codons. Sup35/eRF3 mediates sup45/ERF1 delivery to stop codons: The eRF1-eRF3-GTP complex binds to a stop codon in the ribosomal A-site. GTP hydrolysis by sup35/eRF3 induces a conformational change that leads to its dissociation, permitting sup45/eRF1 to accommodate fully in the A-site. The chain is Eukaryotic peptide chain release factor GTP-binding subunit (sup35) from Schizosaccharomyces pombe (strain 972 / ATCC 24843) (Fission yeast).